The chain runs to 374 residues: Pre-B-cell leukemia transcription factor 4 (374 aa).

One can recognise a PBC domain in the interval proline 14–aspartate 209. Residues aspartate 21–glycine 100 form a PBC-A region. Residues glycine 103–aspartate 209 are PBC-B. A DNA-binding region (homeobox; TALE-type) is located at residues alanine 210–methionine 272. Positions glutamine 333 to asparagine 374 are disordered. Over residues leucine 341–threonine 358 the composition is skewed to polar residues.

It belongs to the TALE/PBX homeobox family.

It is found in the nucleus. This chain is Pre-B-cell leukemia transcription factor 4 (PBX4), found in Homo sapiens (Human).